The sequence spans 651 residues: Histone-lysine N-methyltransferase family member SUVH2 (651 aa).

Positions 1 to 28 (MSTLLPFPDLNLMPDSQSSTAGTTAGDT) are disordered. Over residues 15–28 (DSQSSTAGTTAGDT) the composition is skewed to low complexity. Positions 202-358 (DKHIVGPVTG…KFRLVRIEGQ (157 aa)) constitute a YDG domain. Residues 434–492 (TGCECKLSCTDDCLCARKNGGEFAYDDNGHLLKGKHVVFECGEFCTCGPSCKSRVTQKG) enclose the Pre-SET domain. C436, C438, C442, C446, C448, C474, C478, C480, and C484 together coordinate Zn(2+). One can recognise an SET domain in the interval 495 to 638 (NRLEVFRSKE…PLAELSLDYG (144 aa)).

The protein belongs to the class V-like SAM-binding methyltransferase superfamily. Histone-lysine methyltransferase family. Suvar3-9 subfamily. In terms of assembly, self-interacts. Interacts with DNA-directed RNA polymerase V subunit NRPE1 and with DRD1 and DMS3. Binds to MORC1/CRT1. Expressed at low levels in leaves stems and flowers.

It is found in the nucleus. The protein resides in the chromosome. The protein localises to the centromere. In terms of biological role, histone methyltransferase family member that plays a central role in gene silencing. Together with MORC6 and SUVH9, regulates the silencing of some transposable elements (TEs). According to PubMed:15775980, it is required for normal methylation of 'Lys-9' and 'Lys-27' of histone H3, 'Lys-20' of H4, and cytosine, but PubMed:19043555 see no significant effect on histone methylation when the gene is mutated. According to PubMed:19043555, the protein does not bind S-adenosyl-L-methionine and lacks methyltransferase activity. Instead, it may function downstream of DRM2 in RNA-directed DNA methylation, binding to methylated DNA and recruiting DNA-directed RNA polymerase V to chromatin. The protein is Histone-lysine N-methyltransferase family member SUVH2 (SUVH2) of Arabidopsis thaliana (Mouse-ear cress).